A 156-amino-acid chain; its full sequence is MAQKALEQTTVKEEKLELPTTIRGLAQLLDIPLVDCLLPCNFCGRFLDYLEVCEFDYKKLTLIWKDYSVYACCRLCCSATATYEFNVFYQQTVLGRDIELATGLSIFEIDIRCHTCLSFLDIIEKLDSCGRGLPFHKVRNAWKGVCRQCKHFYNDW.

Zinc fingers lie at residues 40-76 and 113-149; these read CNFC…CRLC and CHTC…CRQC.

It belongs to the papillomaviridae E6 protein family. As to quaternary structure, forms homodimers. Interacts with ubiquitin-protein ligase UBE3A/E6-AP; this interaction stimulates UBE3A ubiquitin activity. Interacts with host BAK1.

It is found in the host cytoplasm. It localises to the host nucleus. In terms of biological role, plays a major role in the induction and maintenance of cellular transformation. E6 associates with host UBE3A/E6-AP ubiquitin-protein ligase and modulates its activity. Protects host keratinocytes from apoptosis by mediating the degradation of host BAK1. May also inhibit host immune response. The polypeptide is Protein E6 (Homo sapiens (Human)).